Here is a 324-residue protein sequence, read N- to C-terminus: Glyoxylate/hydroxypyruvate reductase B (324 aa).

Residues arginine 237 and glutamate 266 contribute to the active site. The active-site Proton donor is the histidine 285.

This sequence belongs to the D-isomer specific 2-hydroxyacid dehydrogenase family. GhrB subfamily. In terms of assembly, homodimer.

It localises to the cytoplasm. The enzyme catalyses glycolate + NADP(+) = glyoxylate + NADPH + H(+). It carries out the reaction (R)-glycerate + NAD(+) = 3-hydroxypyruvate + NADH + H(+). The catalysed reaction is (R)-glycerate + NADP(+) = 3-hydroxypyruvate + NADPH + H(+). Its function is as follows. Catalyzes the NADPH-dependent reduction of glyoxylate and hydroxypyruvate into glycolate and glycerate, respectively. The chain is Glyoxylate/hydroxypyruvate reductase B from Salmonella choleraesuis (strain SC-B67).